We begin with the raw amino-acid sequence, 77 residues long: U8-lycotoxin-Ls1e (77 aa).

The first 20 residues, 1–20 (MKLIIFTGLVLFAIVSLIEA), serve as a signal peptide directing secretion. A propeptide spanning residues 21–26 (QAENEK) is cleaved from the precursor.

This sequence belongs to the neurotoxin 19 (CSTX) family. 08 (U8-Lctx) subfamily. Post-translationally, contains 4 disulfide bonds. As to expression, expressed by the venom gland.

The protein localises to the secreted. The polypeptide is U8-lycotoxin-Ls1e (Lycosa singoriensis (Wolf spider)).